Here is a 225-residue protein sequence, read N- to C-terminus: Phosphoribosylformylglycinamidine synthase subunit PurQ (225 aa).

The 221-residue stretch at 5–225 (SAVITFPGSN…ESVVRGLVEA (221 aa)) folds into the Glutamine amidotransferase type-1 domain. Catalysis depends on cysteine 89, which acts as the Nucleophile. Catalysis depends on residues histidine 197 and glutamate 199.

Part of the FGAM synthase complex composed of 1 PurL, 1 PurQ and 2 PurS subunits.

The protein resides in the cytoplasm. The enzyme catalyses N(2)-formyl-N(1)-(5-phospho-beta-D-ribosyl)glycinamide + L-glutamine + ATP + H2O = 2-formamido-N(1)-(5-O-phospho-beta-D-ribosyl)acetamidine + L-glutamate + ADP + phosphate + H(+). The catalysed reaction is L-glutamine + H2O = L-glutamate + NH4(+). Its pathway is purine metabolism; IMP biosynthesis via de novo pathway; 5-amino-1-(5-phospho-D-ribosyl)imidazole from N(2)-formyl-N(1)-(5-phospho-D-ribosyl)glycinamide: step 1/2. Functionally, part of the phosphoribosylformylglycinamidine synthase complex involved in the purines biosynthetic pathway. Catalyzes the ATP-dependent conversion of formylglycinamide ribonucleotide (FGAR) and glutamine to yield formylglycinamidine ribonucleotide (FGAM) and glutamate. The FGAM synthase complex is composed of three subunits. PurQ produces an ammonia molecule by converting glutamine to glutamate. PurL transfers the ammonia molecule to FGAR to form FGAM in an ATP-dependent manner. PurS interacts with PurQ and PurL and is thought to assist in the transfer of the ammonia molecule from PurQ to PurL. The chain is Phosphoribosylformylglycinamidine synthase subunit PurQ from Novosphingobium aromaticivorans (strain ATCC 700278 / DSM 12444 / CCUG 56034 / CIP 105152 / NBRC 16084 / F199).